A 130-amino-acid polypeptide reads, in one-letter code: Small ribosomal subunit protein uS11c (130 aa).

Belongs to the universal ribosomal protein uS11 family. Part of the 30S ribosomal subunit.

It localises to the plastid. The protein resides in the chloroplast. The protein is Small ribosomal subunit protein uS11c of Mesostigma viride (Green alga).